A 204-amino-acid chain; its full sequence is MMRTLITTHPLLLLLLLQQLLQPVQFQEVDTDFDSPDDDMEEFEEYLEEFHRTGPTRPPTKEKVERRVLIEPGMPLYDRNYCNEEIMRKNVYHKQRCVTEHYFLLMQYDELQKICYNRFVPCKNGVRKCNRSKGLVEGVYCNLTEAFEIPWCKYESFYRRGYVLITCTWQNEIQKLIPHTINDLVEPPEHRSFLNEDGVFVIPP.

The signal sequence occupies residues 1-26; it reads MMRTLITTHPLLLLLLLQQLLQPVQF. 3 disulfides stabilise this stretch: cysteine 97-cysteine 152, cysteine 115-cysteine 167, and cysteine 122-cysteine 129. 2 N-linked (GlcNAc...) asparagine glycosylation sites follow: asparagine 130 and asparagine 142.

This sequence belongs to the pancreatic ribonuclease family.

Its subcellular location is the secreted. Functionally, does not exhibit any ribonuclease activity. This Papio anubis (Olive baboon) protein is Inactive ribonuclease-like protein 9 (RNASE9).